We begin with the raw amino-acid sequence, 341 residues long: Geranylgeranyl transferase type-2 subunit beta (341 aa).

PFTB repeat units lie at residues Lys15–Asn55, Gln62–Asp104, Arg122–Asn163, Ala170–Asn211, Val223–Lys264, and Leu271–Asp313. Residues His196–Ala198 and Arg243–Trp255 each bind geranylgeranyl diphosphate. Asp249, Cys251, and His301 together coordinate Zn(2+).

Belongs to the protein prenyltransferase subunit beta family. Heterodimer of an alpha and a beta subunit. The cofactor is Zn(2+).

The catalysed reaction is geranylgeranyl diphosphate + L-cysteinyl-[protein] = S-geranylgeranyl-L-cysteinyl-[protein] + diphosphate. Functionally, catalyzes the transfer of a geranyl-geranyl moiety from geranyl-geranyl pyrophosphate to proteins having the C-terminal -XCC or -XCXC, where both cysteines may become modified. Acts on YPT1 and SEC4. The sequence is that of Geranylgeranyl transferase type-2 subunit beta (BET2) from Candida albicans (Yeast).